Consider the following 442-residue polypeptide: tRNA-2-methylthio-N(6)-dimethylallyladenosine synthase (442 aa).

The MTTase N-terminal domain maps to 2-117 (KSLYIKTYGC…LPELIVKASR (116 aa)). C11, C47, C80, C157, C161, and C164 together coordinate [4Fe-4S] cluster. In terms of domain architecture, Radical SAM core spans 143-374 (NSQGSSAFLS…QKLINKQQLE (232 aa)). Residues 377–441 (QSMVGKTIPV…QNSLLGRELQ (65 aa)) enclose the TRAM domain.

The protein belongs to the methylthiotransferase family. MiaB subfamily. Monomer. Requires [4Fe-4S] cluster as cofactor.

The protein resides in the cytoplasm. The enzyme catalyses N(6)-dimethylallyladenosine(37) in tRNA + (sulfur carrier)-SH + AH2 + 2 S-adenosyl-L-methionine = 2-methylsulfanyl-N(6)-dimethylallyladenosine(37) in tRNA + (sulfur carrier)-H + 5'-deoxyadenosine + L-methionine + A + S-adenosyl-L-homocysteine + 2 H(+). In terms of biological role, catalyzes the methylthiolation of N6-(dimethylallyl)adenosine (i(6)A), leading to the formation of 2-methylthio-N6-(dimethylallyl)adenosine (ms(2)i(6)A) at position 37 in tRNAs that read codons beginning with uridine. The polypeptide is tRNA-2-methylthio-N(6)-dimethylallyladenosine synthase (Wolbachia sp. subsp. Brugia malayi (strain TRS)).